The chain runs to 384 residues: Methylthioribose-1-phosphate isomerase (384 aa).

Asp-255 functions as the Proton donor in the catalytic mechanism.

Belongs to the eIF-2B alpha/beta/delta subunits family. MtnA subfamily.

It localises to the cytoplasm. The protein localises to the nucleus. The enzyme catalyses 5-(methylsulfanyl)-alpha-D-ribose 1-phosphate = 5-(methylsulfanyl)-D-ribulose 1-phosphate. It functions in the pathway amino-acid biosynthesis; L-methionine biosynthesis via salvage pathway; L-methionine from S-methyl-5-thio-alpha-D-ribose 1-phosphate: step 1/6. In terms of biological role, catalyzes the interconversion of methylthioribose-1-phosphate (MTR-1-P) into methylthioribulose-1-phosphate (MTRu-1-P). This Talaromyces marneffei (strain ATCC 18224 / CBS 334.59 / QM 7333) (Penicillium marneffei) protein is Methylthioribose-1-phosphate isomerase (mri1).